Reading from the N-terminus, the 241-residue chain is Probable 2-phosphosulfolactate phosphatase (241 aa).

This sequence belongs to the ComB family. Mg(2+) serves as cofactor.

The enzyme catalyses (2R)-O-phospho-3-sulfolactate + H2O = (2R)-3-sulfolactate + phosphate. This chain is Probable 2-phosphosulfolactate phosphatase, found in Caldanaerobacter subterraneus subsp. tengcongensis (strain DSM 15242 / JCM 11007 / NBRC 100824 / MB4) (Thermoanaerobacter tengcongensis).